The primary structure comprises 269 residues: AA9 family lytic polysaccharide monooxygenase I (269 aa).

The first 17 residues, 1-17 (MFSKKITALALVSAVKA), serve as a signal peptide directing secretion. Residues His18 and His103 each coordinate Cu(2+). Cysteines 73 and 196 form a disulfide. Asn156 is a glycosylation site (N-linked (GlcNAc...) asparagine). Residues His182 and Gln191 each contribute to the O2 site. Tyr193 is a Cu(2+) binding site.

This sequence belongs to the polysaccharide monooxygenase AA9 family. Cu(2+) serves as cofactor.

The protein resides in the secreted. The enzyme catalyses [(1-&gt;4)-beta-D-glucosyl]n+m + reduced acceptor + O2 = 4-dehydro-beta-D-glucosyl-[(1-&gt;4)-beta-D-glucosyl]n-1 + [(1-&gt;4)-beta-D-glucosyl]m + acceptor + H2O.. Lytic polysaccharide monooxygenase (LPMO) that depolymerizes crystalline and amorphous polysaccharides via the oxidation of scissile alpha- or beta-(1-4)-glycosidic bonds, yielding C1 and C4 oxidation products. Catalysis by LPMOs requires the reduction of the active-site copper from Cu(II) to Cu(I) by a reducing agent and H(2)O(2) or O(2) as a cosubstrate. This is AA9 family lytic polysaccharide monooxygenase I from Botryotinia fuckeliana (strain B05.10) (Noble rot fungus).